The following is a 324-amino-acid chain: MNLRKDKVVQSTDGDALSSKYSAVQKGYLQDEFIDLFVAGSKQAAAQQGPGSARKVVAQFQPKLPLINRGTFVRHHAIDVLVDRFLAAKKPGQRVQIISLGAGSDTRPFSLWSSKPENRDEILYHEIDFAVSVERKRDIIMQDSTLRELVGAQEYDKTTGMHTQRYHLHGIDLRSIGPGFVLPGSDPSLATLIISECCLCYLEPDQAKQVIFWITSEFTNSTIVMYEPLSGQDQFGQVMIENLASRGISIPSMTKFPSLESQIERFKAAGYTEVLATSMDVIHDEWLSPEEQQRIHGLEFLDEREELLLLLKHYCVVWASNLTK.

Residues R74, G101, D128, 172–173, and E196 contribute to the S-adenosyl-L-methionine site; that span reads DL.

The protein belongs to the methyltransferase superfamily. LCMT family.

The catalysed reaction is [phosphatase 2A protein]-C-terminal L-leucine + S-adenosyl-L-methionine = [phosphatase 2A protein]-C-terminal L-leucine methyl ester + S-adenosyl-L-homocysteine. Methylates the carboxyl group of the C-terminal leucine residue of protein phosphatase 2A catalytic subunits to form alpha-leucine ester residues. This is Leucine carboxyl methyltransferase 1 (PPM1) from Yarrowia lipolytica (strain CLIB 122 / E 150) (Yeast).